The sequence spans 274 residues: tRNA pseudouridine synthase A (274 aa).

The Nucleophile role is filled by D60. Residue Y118 participates in substrate binding.

The protein belongs to the tRNA pseudouridine synthase TruA family. As to quaternary structure, homodimer.

The enzyme catalyses uridine(38/39/40) in tRNA = pseudouridine(38/39/40) in tRNA. Its function is as follows. Formation of pseudouridine at positions 38, 39 and 40 in the anticodon stem and loop of transfer RNAs. This chain is tRNA pseudouridine synthase A, found in Picosynechococcus sp. (strain ATCC 27264 / PCC 7002 / PR-6) (Agmenellum quadruplicatum).